The primary structure comprises 344 residues: Succinylglutamate desuccinylase (344 aa).

Zn(2+) is bound by residues H63, E66, and H160. The active site involves E224.

This sequence belongs to the AspA/AstE family. Succinylglutamate desuccinylase subfamily. The cofactor is Zn(2+).

The catalysed reaction is N-succinyl-L-glutamate + H2O = L-glutamate + succinate. Its pathway is amino-acid degradation; L-arginine degradation via AST pathway; L-glutamate and succinate from L-arginine: step 5/5. Transforms N(2)-succinylglutamate into succinate and glutamate. The protein is Succinylglutamate desuccinylase of Shewanella sp. (strain MR-4).